The chain runs to 292 residues: Potassium channel, subfamily K, member 16 (292 aa).

The Cytoplasmic portion of the chain corresponds to 1–13 (MPRAGVCGCWGGQ). The helical transmembrane segment at 14–34 (VLPLLLAYICYLLLGATIFQL) threads the bilayer. Positions 98–116 (SFFFAGTVVTTIGYGNLAP) form an intramembrane region, pore-forming. Positions 108, 109, 110, and 111 each coordinate K(+). The interval 108-113 (TIGYGN) is selectivity filter 1. The chain crosses the membrane as a helical span at residues 120–140 (AGQVFCVFYALMGIPLNVVFL). Residues 141–165 (NHLGTGLRAHLTTLDRWEDHPRHSQ) lie on the Cytoplasmic side of the membrane. Residues 166 to 186 (LLQVLGLALFLTLGTLVILIF) traverse the membrane as a helical segment. An intramembrane region (pore-forming) is located at residues 202-221 (GFYFAFITLSTIGFGDYVVG). 4 residues coordinate K(+): threonine 212, isoleucine 213, glycine 214, and phenylalanine 215. The segment at 212-217 (TIGFGD) is selectivity filter 2. A helical transmembrane segment spans residues 238–258 (IWILLGLAWLAVVLSLGSLLL). The Cytoplasmic segment spans residues 259 to 292 (HRCSRLWQLIRGLDLKDGAAPDSEPRSQKIPISA).

The protein belongs to the two pore domain potassium channel (TC 1.A.1.8) family. As to quaternary structure, homodimer; disulfide-linked. Heterodimer with KCNK17 and KCNK5. As to expression, expressed in pacreatic beta-cells (at protein level). Expressed in pacreatic delta-cells (at protein level).

The protein resides in the cell membrane. It localises to the endoplasmic reticulum membrane. Its subcellular location is the mitochondrion inner membrane. It carries out the reaction K(+)(in) = K(+)(out). The catalysed reaction is Rb(+)(in) = Rb(+)(out). It catalyses the reaction Cs(+)(in) = Cs(+)(out). Functionally, k(+) channel that conducts voltage-dependent outward rectifying currents upon membrane depolarization. Voltage sensing is coupled to K(+) electrochemical gradient in an 'ion flux gating' mode where outward but not inward ion flow opens the gate. Homo- and heterodimerizes to form functional channels with distinct regulatory and gating properties. In pancreatic islets, conducts K(+) countercurrents for Ca(2+) release from the endoplasmic reticulum (ER) and regulates the frequency and duration of cytosolic Ca(2+) oscillations coupled to secretion of pancreatic hormones. In pancreatic beta cells, drives ER Ca(2+) efflux, which in turn activates Ca(2+)-dependent plasma membrane K(+) slow currents and cytosolic Ca(2+) influx, overall contributing to synchronous cytosolic Ca(2+) oscillations. Limits glucose-induced cytosolic Ca(2+) oscillations coupled to second-phase INS secretion. Contributes to beta cell adaptation to acute inflammation by maintaining normal cytosolic Ca(2+) levels and INS secretion. May regulate beta cell mitochondrial Ca(2+) levels either indirectly via ER Ca(2+) efflux or directly by hyperpolarizing the mitochondrial membrane potential. Limits mitochondrial Ca(2+) oscillations and ATP production involved in glucose homeostasis upon metabolic stress. In pancreatic delta cells, limits Ca(2+)-induced Ca(2+)-release involved in somatostatin secretion and modulates islet paracrine signaling involved in glucagon secretion. Permeable to other monovalent cations such as Rb(+) and Cs(+). This Mus musculus (Mouse) protein is Potassium channel, subfamily K, member 16.